A 448-amino-acid chain; its full sequence is Beclin-1 (448 aa).

Methionine 1 is modified (N-acetylmethionine). 2 positions are modified to phosphoserine: serine 14 and serine 29. Serine 88, serine 91, and serine 94 each carry phosphoserine; by AMPK. The BH3 motif lies at 106 to 125 (TMENLSRRLKVTGDLFDIMS). The interval 110-157 (LSRRLKVTGDLFDIMSGQTDVDHPLCEECTDTLLDQLDTQLNVTENEC) is interaction with BCL2 and BCL2L1. Threonine 117 carries the phosphothreonine; by DAPK1 modification. A coiled-coil region spans residues 140 to 267 (DTLLDQLDTQ…QLDKLKKTNV (128 aa)). Residues 243 to 448 (DELKSVENQM…AWVSSQFYNK (206 aa)) form an evolutionary conserved domain (ECD) region. Residues lysine 400 and lysine 435 each participate in a glycyl lysine isopeptide (Lys-Gly) (interchain with G-Cter in ubiquitin) cross-link. A required for membrane-association region spans residues 423–448 (WTKALKFMLTNLKWGLAWVSSQFYNK).

It belongs to the beclin family. In terms of assembly, a homodimeric form is proposed to exist; this metastable form readily transits to ATG14- or UVRAG-containing complexes with BECN1:UVRAG being more stable than BECN1:ATG14. Component of the PI3K (PI3KC3/PI3K-III/class III phosphatidylinositol 3-kinase) complex the core of which is composed of the catalytic subunit PIK3C3, the regulatory subunit PIK3R4 and BECN1 associating with additional regulatory/auxiliary subunits to form alternative complex forms. Alternative complex forms containing a fourth regulatory subunit in a mutually exclusive manner are PI3K complex I (PI3KC3-C1) containing ATG14, and PI3K complex II (PI3KC3-C2) containing UVRAG. PI3KC3-C1 displays a V-shaped architecture with PIK3R4 serving as a bridge between PIK3C3 and the ATG14:BECN1 subcomplex. Both, PI3KC3-C1 and PI3KC3-C2, can associate with further regulatory subunits, such as RUBCN, SH3GLB1/Bif-1 and AMBRA1. PI3KC3-C1 probably associates with PIK3CB. Forms a complex with PPP2CA and AMBRA1; AMBRA1 and BECN1 components of the complex regulate MYC stability via different pathways. Component of the complex, at least composed of LRPPRC, BECN1 and BCL2; the interactions prevent BECN1 from forming an autophagy-inducing complex with PIK3C3. Interacts with AMBRA1, GOPC, GRID2. Interacts with BCL2 and BCL2L1 isoform Bcl-X(L); the interaction inhibits BECN1 function in promoting autophagy by interfering with the formation of the PI3K complex. Interacts with cytosolic HMGB1; inhibits the interaction of BECN1 and BCL2 leading to promotion of autophagy. Interacts with USP10, USP13, VMP1, DAPK1, RAB39A. Interacts with the poly-Gln domain of ATXN3; the interaction causes deubiquitination at Lys-400 and stabilizes BECN1. Interacts with SLAMF1. Interacts with TRIM5; the interaction causes activation of BECN1 by causing its dissociation from its inhibitors BCL2 and TAB2. Interacts with active ULK1 (phosphorylated on 'Ser-317') and MEFV simultaneously. Interacts with WDR81 and WDR91; negatively regulates the PI3 kinase/PI3K activity associated with endosomal membranes. Interacts with LAPTM4B; competes with EGFR for LAPTM4B binding; regulates EGFR activity. Interacts with TRIM50. Interacts with TRIM16. Interacts with ATG14; this interaction is increased in the absence of TMEM39A. Interacts with WASHC1; preventing interaction with AMBRA1 and the DCX(AMBRA1) complex and subsequent ubiquitination. Interacts with TRIM17. Interacts with BCL2L10/BCL-B (via BH1 domain). Interacts with SH3BGRL. Interacts with IRGM; enhancing BECN1-interacting partners and influencing the composition of the BECN1 complex. Interacts with ARMC3. Interacts with LRPPRC. As to quaternary structure, (Microbial infection) Interacts with African swine fever virus (ASFV) apoptosis regulator Bcl-2 homolog; this interaction allows the virus to inhibit BECN1, and thus autophagy. Phosphorylation at Thr-117 by DAPK1 reduces its interaction with BCL2 and BCL2L1 and promotes induction of autophagy. In response to autophagic stimuli, phosphorylated at serine residues by AMPK in an ATG14-dependent manner, and this phosphorylation is critical for maximally efficient autophagy. In terms of processing, polyubiquitinated by NEDD4, both with 'Lys-11'- and 'Lys-63'-linkages. 'Lys-11'-linked polyubiquitination leads to degradation and is enhanced when the stabilizing interaction partner VPS34 is depleted. Deubiquitinated by USP10 and USP13, leading to stabilize the PIK3C3/VPS34-containing complexes. Polyubiquitinated at Lys-400 with 'Lys-48'-linkages. 'Lys-48'-linked polyubiquitination of Lys-400 leads to degradation. Deubiquitinated by ATXN3, leading to stabilization. Ubiquitinated at Lys-435 via 'Lys-63'-linkage by the DCX(AMBRA1) complex, thereby increasing the association between BECN1 and PIK3C3 to promote PIK3C3 activity. 'Lys-48'-linked ubiquitination by RNF216 leads to proteasomal degradation and autophagy inhibition. Post-translationally, proteolytically processed by caspases including CASP8 and CASP3; the C-terminal fragments lack autophagy-inducing capacity and are proposed to induce apoptosis. Thus the cleavage is proposed to be an determinant to switch from autophagy to apoptosis pathways affecting cellular homeostasis including viral infections and survival of tumor cells.

The protein localises to the cytoplasm. Its subcellular location is the golgi apparatus. It is found in the trans-Golgi network membrane. It localises to the endosome membrane. The protein resides in the endoplasmic reticulum membrane. The protein localises to the mitochondrion membrane. Its subcellular location is the cytoplasmic vesicle. It is found in the autophagosome. It localises to the mitochondrion. The protein resides in the nucleus. Plays a central role in autophagy. Acts as a core subunit of the PI3K complex that mediates formation of phosphatidylinositol 3-phosphate; different complex forms are believed to play a role in multiple membrane trafficking pathways: PI3KC3-C1 is involved in initiation of autophagosomes and PI3KC3-C2 in maturation of autophagosomes and endocytosis. Involved in regulation of degradative endocytic trafficking and required for the abscission step in cytokinesis, probably in the context of PI3KC3-C2. Essential for the formation of PI3KC3-C2 but not PI3KC3-C1 PI3K complex forms. Involved in endocytosis. May play a role in antiviral host defense. Its function is as follows. Beclin-1-C 35 kDa localized to mitochondria can promote apoptosis; it induces the mitochondrial translocation of BAX and the release of proapoptotic factors. The sequence is that of Beclin-1 (BECN1) from Sus scrofa (Pig).